Reading from the N-terminus, the 489-residue chain is uncharacterized protein (489 aa).

13 consecutive transmembrane segments (helical) span residues 1–21 (MNAALIIIFGVLLLSIFLGIR), 40–60 (FGTVFVFLLMAGEIYTTFTFL), 74–94 (FYIIAYGCLAYILSYWLLPAV), 117–137 (PLLGILVSLVGIAALIPYLVL), 158–178 (AAIWIGAVSITVYVMVSGIHG), 188–208 (IMILVVVLFLGVYLPIHYYGG), 234–254 (AWFSSTVLLTALGFYMWPHTF), 271–291 (IIMPLYQLVLLFVLFVGFAAI), 318–338 (FVGIIGAAGLLTALVPGSMIL), 362–382 (VSALAKFLVPVIALISVYFTF), 388–408 (IVTLLLMGYSLVTQLFPALLF), 422–442 (FAGIIAGVGAVTYITMTETTI), and 456–476 (LNVGIVALLLNITVMMAVSLM).

Belongs to the sodium:solute symporter (SSF) (TC 2.A.21) family.

The protein localises to the cell membrane. This is an uncharacterized protein from Bacillus subtilis (strain 168).